The sequence spans 356 residues: Phosphate acyltransferase (356 aa).

The protein belongs to the PlsX family. In terms of assembly, homodimer. Probably interacts with PlsY.

Its subcellular location is the cytoplasm. The enzyme catalyses a fatty acyl-[ACP] + phosphate = an acyl phosphate + holo-[ACP]. Its pathway is lipid metabolism; phospholipid metabolism. Functionally, catalyzes the reversible formation of acyl-phosphate (acyl-PO(4)) from acyl-[acyl-carrier-protein] (acyl-ACP). This enzyme utilizes acyl-ACP as fatty acyl donor, but not acyl-CoA. This is Phosphate acyltransferase from Bartonella bacilliformis (strain ATCC 35685 / KC583 / Herrer 020/F12,63).